The primary structure comprises 428 residues: Serine--tRNA ligase (428 aa).

235 to 237 (TAE) is a binding site for L-serine. 266 to 268 (RSE) serves as a coordination point for ATP. Glutamate 289 serves as a coordination point for L-serine. Position 353–356 (353–356 (EISS)) interacts with ATP. Residue serine 389 coordinates L-serine.

The protein belongs to the class-II aminoacyl-tRNA synthetase family. Type-1 seryl-tRNA synthetase subfamily. In terms of assembly, homodimer. The tRNA molecule binds across the dimer.

Its subcellular location is the cytoplasm. The enzyme catalyses tRNA(Ser) + L-serine + ATP = L-seryl-tRNA(Ser) + AMP + diphosphate + H(+). It carries out the reaction tRNA(Sec) + L-serine + ATP = L-seryl-tRNA(Sec) + AMP + diphosphate + H(+). It functions in the pathway aminoacyl-tRNA biosynthesis; selenocysteinyl-tRNA(Sec) biosynthesis; L-seryl-tRNA(Sec) from L-serine and tRNA(Sec): step 1/1. Catalyzes the attachment of serine to tRNA(Ser). Is also able to aminoacylate tRNA(Sec) with serine, to form the misacylated tRNA L-seryl-tRNA(Sec), which will be further converted into selenocysteinyl-tRNA(Sec). The protein is Serine--tRNA ligase of Shewanella sediminis (strain HAW-EB3).